The sequence spans 644 residues: Magnetosome protein MamZ (644 aa).

The major facilitator domain stretch occupies residues 1 to 427 (MPRNAEAPAK…YAAWLLANGI (427 aa)). 18 helical membrane passes run 22–42 (WNIIYLLMTVGALMAALSISI), 63–83 (ADIQVVAEIVSIVCVGWFGLL), 92–112 (IIALGFLIAVVGAAVSLLSLQ), 113–133 (VGLAFGAAGLVLFYLTRVLLT), 159–179 (LMGNLVFMMVFGGTMLAAIVM), 185–205 (PGGVFLIMCLPLLAGIAGFQL), 254–274 (VIILSLFFSLWCISVSDLVGV), 281–301 (AHAAVMIGLLGLAVLAAVPLW), 311–331 (ISAIGASLSLAALGYIWLGMF), 337–357 (WLVALPLLMVGIGHAGCFVTL), 369–389 (ILGAMVGAGYLVGGLGTVMLV), 403–423 (APFILMGTGKMLVTLYAAWLL), 440–460 (TVDWKPLVFLTAALPFVWLVG), 478–498 (VGFVNRYLGDWAFTFLIISLA), 518–538 (IGLFAFFYAVMHVLAYVALEW), 553–573 (PFILLGLVAFALLIPLAFTSA), 588–608 (LHSATYVINALVALHFILAAN), and 612–629 (GEPYVYAAAVIVLLWYRF). Positions 488–599 (WAFTFLIISL…SATYVINALV (112 aa)) are ferric reductase-like domain.

It in the N-terminal section; belongs to the major facilitator superfamily.

The protein localises to the magnetosome membrane. In terms of biological role, required for correct biomineralization of the magnetosome; probably converts and then transports some form of iron. It is partially functionally redundant with MamH. May function with MamX, MamY amd Mms6. The protein is Magnetosome protein MamZ of Paramagnetospirillum magneticum (strain ATCC 700264 / AMB-1) (Magnetospirillum magneticum).